Reading from the N-terminus, the 451-residue chain is NADH-quinone oxidoreductase subunit D (451 aa).

Belongs to the complex I 49 kDa subunit family. As to quaternary structure, NDH-1 is composed of 14 different subunits. Subunits NuoB, C, D, E, F, and G constitute the peripheral sector of the complex.

It is found in the cell membrane. It carries out the reaction a quinone + NADH + 5 H(+)(in) = a quinol + NAD(+) + 4 H(+)(out). Functionally, NDH-1 shuttles electrons from NADH, via FMN and iron-sulfur (Fe-S) centers, to quinones in the respiratory chain. The immediate electron acceptor for the enzyme in this species is believed to be a menaquinone. Couples the redox reaction to proton translocation (for every two electrons transferred, four hydrogen ions are translocated across the cytoplasmic membrane), and thus conserves the redox energy in a proton gradient. This is NADH-quinone oxidoreductase subunit D from Mycolicibacterium gilvum (strain PYR-GCK) (Mycobacterium gilvum (strain PYR-GCK)).